The sequence spans 318 residues: Transaldolase (318 aa).

The active-site Schiff-base intermediate with substrate is Lys-126.

It belongs to the transaldolase family. Type 1 subfamily. In terms of assembly, homodimer.

It is found in the cytoplasm. The catalysed reaction is D-sedoheptulose 7-phosphate + D-glyceraldehyde 3-phosphate = D-erythrose 4-phosphate + beta-D-fructose 6-phosphate. It participates in carbohydrate degradation; pentose phosphate pathway; D-glyceraldehyde 3-phosphate and beta-D-fructose 6-phosphate from D-ribose 5-phosphate and D-xylulose 5-phosphate (non-oxidative stage): step 2/3. Transaldolase is important for the balance of metabolites in the pentose-phosphate pathway. The sequence is that of Transaldolase from Variovorax paradoxus (strain S110).